Here is a 753-residue protein sequence, read N- to C-terminus: MTILNHTLGFPRVGLRRELKKAQESYWAGNSTREELLAVGRELRARHWDQQKQAGIDLLPVGDFAWYDHVLTTSLLLGNVPQRHQNNDGSVDIDTLFRIGRGRAPTGEPAAAAEMTKWFNTNYHYMVPEFVKGQQFKLTWTQLLEEVDEALALGHKVKPVLLGPITYLWLGKVKGEQFDRLSLLNDILPVYQQVLAELAKRGIEWVQIDEPALVLELPQAWLNAYKPAYDALQGQVKLLLTTYFEGVTPNLDTITALPVQGLHVDLVHGKDDVAELHKRLPSDWLLSAGLINGRNVWRADLTEKYAQIKDIVGKRDLWVASSCSLLHSPIDLSVETRLDAEVKSWFAFALQKCHELALLRDALNSGDTAALAEWSAPIQARRHSTRVHNPAVEKRLAAITAQDSQRANVYEVRAEAQRARFKLPAWPTTTIGSFPQTTEIRTLRLDFKKGNLDANNYRTGIAEHIKQAIVEQERLGLDVLVHGEAERNDMVEYFGEHLDGFVFTQNGWVQSYGSRCVKPPIVIGDVSRPAPITVEWAKYAQSLTDKPVKGMLTGPVTILCWSFPREDVSRETIAKQIALALRDEVADLEAAGIGIIQIDEPALREGLPLRRSDWDAYLQWGVEAFRINAAVAKDDTQIHTHMCYCEFNDIMDSIAALDADVITIETSRSDMELLESFEEFDYPNEIGPGVYDIHSPNVPSVEWIEALLKKAAKRIPAERLWVNPDCGLKTRGWPETRAALANMVQAAQNLRRG.

Residues 17–20 (RELK) and K117 contribute to the 5-methyltetrahydropteroyltri-L-glutamate site. L-homocysteine contacts are provided by residues 431-433 (IGS) and E484. L-methionine-binding positions include 431–433 (IGS) and E484. Residues 515 to 516 (RC) and W561 each bind 5-methyltetrahydropteroyltri-L-glutamate. Residue D599 coordinates L-homocysteine. Position 599 (D599) interacts with L-methionine. E605 provides a ligand contact to 5-methyltetrahydropteroyltri-L-glutamate. The Zn(2+) site is built by H641, C643, and E665. H694 serves as the catalytic Proton donor. Residue C726 participates in Zn(2+) binding.

It belongs to the vitamin-B12 independent methionine synthase family. Zn(2+) serves as cofactor.

The enzyme catalyses 5-methyltetrahydropteroyltri-L-glutamate + L-homocysteine = tetrahydropteroyltri-L-glutamate + L-methionine. It functions in the pathway amino-acid biosynthesis; L-methionine biosynthesis via de novo pathway; L-methionine from L-homocysteine (MetE route): step 1/1. Functionally, catalyzes the transfer of a methyl group from 5-methyltetrahydrofolate to homocysteine resulting in methionine formation. The protein is 5-methyltetrahydropteroyltriglutamate--homocysteine methyltransferase of Escherichia coli (strain UTI89 / UPEC).